We begin with the raw amino-acid sequence, 111 residues long: Heavy metal-associated isoprenylated plant protein 10 (111 aa).

Residues methionine 1–valine 68 form the HMA domain. The tract at residues valine 68 to leucine 111 is disordered. Cysteine methyl ester is present on cysteine 108. Cysteine 108 is lipidated: S-farnesyl cysteine. A propeptide spans isoleucine 109–leucine 111 (removed in mature form).

It belongs to the HIPP family.

In terms of biological role, probable heavy-metal-binding protein. This is Heavy metal-associated isoprenylated plant protein 10 from Arabidopsis thaliana (Mouse-ear cress).